Consider the following 205-residue polypeptide: Probable transcription factor Ken (205 aa).

3 consecutive C2H2-type zinc fingers follow at residues 106–128, 134–157, and 173–196; these read YRCEYCGKQFGMSWNLKTHLRVH, FACRLCVAMFKQKAHLLKHLCSVH, and YSCCFCSMCFESVQELVRHLSGHH.

It is found in the nucleus. Probable transcription factor, which is required for terminalia development. The sequence is that of Probable transcription factor Ken (ken) from Drosophila yakuba (Fruit fly).